The sequence spans 172 residues: Galectin-related protein (172 aa).

Residue alanine 2 is modified to N-acetylalanine. Phosphoserine is present on residues serine 22 and serine 25. The Galectin domain maps to 39-168 (PFCGHIKGGM…TIKINGDLQI (130 aa)).

Monomer.

Functionally, does not bind lactose, and may not bind carbohydrates. The chain is Galectin-related protein (LGALSL) from Homo sapiens (Human).